Here is a 181-residue protein sequence, read N- to C-terminus: Protein Syd (181 aa).

It belongs to the Syd family.

It localises to the cell inner membrane. Functionally, interacts with the SecY protein in vivo. May bind preferentially to an uncomplexed state of SecY, thus functioning either as a chelating agent for excess SecY in the cell or as a regulatory factor that negatively controls the translocase function. This chain is Protein Syd, found in Shigella flexneri.